A 483-amino-acid polypeptide reads, in one-letter code: Glutamate--tRNA ligase (483 aa).

Residues 9–19 (PSPTGFLHIGN) carry the 'HIGH' region motif. Positions 253–257 (KLSKR) match the 'KMSKS' region motif. Lysine 256 serves as a coordination point for ATP.

This sequence belongs to the class-I aminoacyl-tRNA synthetase family. Glutamate--tRNA ligase type 1 subfamily. In terms of assembly, monomer.

It localises to the cytoplasm. The enzyme catalyses tRNA(Glu) + L-glutamate + ATP = L-glutamyl-tRNA(Glu) + AMP + diphosphate. Functionally, catalyzes the attachment of glutamate to tRNA(Glu) in a two-step reaction: glutamate is first activated by ATP to form Glu-AMP and then transferred to the acceptor end of tRNA(Glu). The polypeptide is Glutamate--tRNA ligase (Mycoplasma mycoides subsp. mycoides SC (strain CCUG 32753 / NCTC 10114 / PG1)).